The chain runs to 128 residues: Kinase-associated lipoprotein B (128 aa).

An N-terminal signal peptide occupies residues 1-25 (MSTFETGSIVKGFYKTGVYIGEITA). C26 carries the N-palmitoyl cysteine lipid modification. C26 is lipidated: S-diacylglycerol cysteine.

The protein localises to the cell membrane. Functionally, may play a role in the activation or the expression of KinB. The chain is Kinase-associated lipoprotein B (kapB) from Bacillus subtilis (strain 168).